Consider the following 279-residue polypeptide: MIQAETSAADSAVFAGNRAQGAVRFDVRAVDGVTRRGQLHESGSLRVRFPSPEQQGLSAVLVNTAGGIAGGDRFGVDIAVGESARLTLTTAAAEKIYRSHGPAAQLDIALQVAEGGHLAWLPQETILFDQARVERRIDIDLAAGASLLLCESVIFGRSAMGETMRSGRFTDRWRLRIGGKLVFAETVRLDGDIGALLGRPAVAKGGVAIGTALIAPGDAALVARLREDADGFGAEVGITAWNGIAMARFCAQDAAKLRADMMAVLRRAAGRALPRLWLG.

This sequence belongs to the UreD family. UreD, UreF and UreG form a complex that acts as a GTP-hydrolysis-dependent molecular chaperone, activating the urease apoprotein by helping to assemble the nickel containing metallocenter of UreC. The UreE protein probably delivers the nickel.

It is found in the cytoplasm. Its function is as follows. Required for maturation of urease via the functional incorporation of the urease nickel metallocenter. This chain is Urease accessory protein UreD, found in Rhodopseudomonas palustris (strain HaA2).